Here is a 241-residue protein sequence, read N- to C-terminus: Small ribosomal subunit protein uS5 (241 aa).

A disordered region spans residues 1–53 (MSDNEKETQVAEETQNTQAAAESNNEDRKSRRGQRGEGRRGERRNRREESHEN). Residues 11 to 22 (AEETQNTQAAAE) show a composition bias toward low complexity. Basic and acidic residues predominate over residues 25-53 (NEDRKSRRGQRGEGRRGERRNRREESHEN). Positions 55-118 (MLDRVVTINR…LDAKKHMFTV (64 aa)) constitute an S5 DRBM domain.

The protein belongs to the universal ribosomal protein uS5 family. Part of the 30S ribosomal subunit. Contacts proteins S4 and S8.

In terms of biological role, with S4 and S12 plays an important role in translational accuracy. Its function is as follows. Located at the back of the 30S subunit body where it stabilizes the conformation of the head with respect to the body. This is Small ribosomal subunit protein uS5 from Bifidobacterium adolescentis (strain ATCC 15703 / DSM 20083 / NCTC 11814 / E194a).